The following is a 473-amino-acid chain: TOX high mobility group box family member 2 (473 aa).

Disordered stretches follow at residues 1–42 (MSDG…SLLH), 139–211 (GLRS…VSAY), 277–302 (SKSPPDQGEAKNAQANPPAKMLPPKQ), and 340–473 (LLPG…PSAR). The segment covering 8 to 20 (LLSTSQTYNSQGE) has biased composition (polar residues). The required for transcriptional activation stretch occupies residues 25–63 (YEIPPITPPNLPEPSLLHLGDHEAGYHSLCHGLAPNGLL). Positions 153–164 (GSKSATPSPSSS) are enriched in low complexity. Basic and acidic residues predominate over residues 171 to 188 (DAHFKISGEKRPSTDPGK). The Nuclear localization signal motif lies at 172-201 (AHFKISGEKRPSTDPGKKAKNPKKKKKKDP). The segment covering 189 to 199 (KAKNPKKKKKK) has biased composition (basic residues). A DNA-binding region (HMG box) is located at residues 204–272 (PQKPVSAYAL…EYLKALAAYR (69 aa)). Low complexity-rich tracts occupy residues 373 to 382 (LLSPPLSMSP) and 415 to 440 (SDFPSGSGSRSPGPSNPSSSGDWDGS). Over residues 463-473 (SPKNLQEPSAR) the composition is skewed to polar residues.

In terms of tissue distribution, highly expressed in ovary, where it is restricted to undifferentiated granulosa cells. Expressed in hypothalamus, pituitary gland, testis and uterus.

The protein localises to the nucleus. In terms of biological role, putative transcriptional activator involved in the hypothalamo-pituitary-gonadal system. This is TOX high mobility group box family member 2 (Tox2) from Rattus norvegicus (Rat).